Reading from the N-terminus, the 229-residue chain is Cytidylate kinase (229 aa).

12–20 (GPSGSGKGT) is an ATP binding site.

Belongs to the cytidylate kinase family. Type 1 subfamily.

It localises to the cytoplasm. The enzyme catalyses CMP + ATP = CDP + ADP. It carries out the reaction dCMP + ATP = dCDP + ADP. This Pseudomonas syringae pv. syringae (strain B728a) protein is Cytidylate kinase.